The primary structure comprises 323 residues: C-type lectin domain family 11 member A (323 aa).

The signal sequence occupies residues 1-21 (MQAAWLLGALVVPQLLGFGHG). Disordered regions lie at residues 55–106 (LGLP…TPED) and 272–295 (LGAQ…TLEN). A Cell attachment site motif is present at residues 61–63 (RGD). The span at 74–90 (EDWEMEEDQGEEEEEEA) shows a compositional bias: acidic residues. Residues 183-320 (LGHKCFLLSR…CQRRLYYVCE (138 aa)) form the C-type lectin domain. 2 cysteine pairs are disulfide-bonded: cysteine 204-cysteine 319 and cysteine 296-cysteine 311.

In terms of processing, O-glycosylated. Probably sulfated on the O-glycans. As to expression, expressed in skeletal tissues including bone marrow, chondrocytes, primary ossification center-associated cells, the perichondrium and periosteum. Lower levels of expression were detected in spleen, thymus, appendix and fetal liver.

It is found in the cytoplasm. It localises to the secreted. Its function is as follows. Promotes osteogenesis by stimulating the differentiation of mesenchymal progenitors into mature osteoblasts. Important for repair and maintenance of adult bone. The sequence is that of C-type lectin domain family 11 member A (CLEC11A) from Homo sapiens (Human).